A 112-amino-acid polypeptide reads, in one-letter code: Ribonuclease P protein component (112 aa).

The protein belongs to the RnpA family. In terms of assembly, consists of a catalytic RNA component (M1 or rnpB) and a protein subunit.

The enzyme catalyses Endonucleolytic cleavage of RNA, removing 5'-extranucleotides from tRNA precursor.. Functionally, RNaseP catalyzes the removal of the 5'-leader sequence from pre-tRNA to produce the mature 5'-terminus. It can also cleave other RNA substrates such as 4.5S RNA. The protein component plays an auxiliary but essential role in vivo by binding to the 5'-leader sequence and broadening the substrate specificity of the ribozyme. This chain is Ribonuclease P protein component, found in Mesomycoplasma hyopneumoniae (strain 7448) (Mycoplasma hyopneumoniae).